Here is a 102-residue protein sequence, read N- to C-terminus: Large ribosomal subunit protein bL21 (102 aa).

Belongs to the bacterial ribosomal protein bL21 family. Part of the 50S ribosomal subunit. Contacts protein L20.

In terms of biological role, this protein binds to 23S rRNA in the presence of protein L20. This Enterococcus faecalis (strain ATCC 700802 / V583) protein is Large ribosomal subunit protein bL21.